The sequence spans 179 residues: dCTP deaminase (179 aa).

Residues 101–106 (RSTLAR) and aspartate 117 contribute to the dCTP site. The active-site Proton donor/acceptor is glutamate 127. Glutamine 165 contributes to the dCTP binding site.

It belongs to the dCTP deaminase family. In terms of assembly, homotrimer.

It carries out the reaction dCTP + H2O + H(+) = dUTP + NH4(+). It participates in pyrimidine metabolism; dUMP biosynthesis; dUMP from dCTP (dUTP route): step 1/2. In terms of biological role, catalyzes the deamination of dCTP to dUTP. In Caldivirga maquilingensis (strain ATCC 700844 / DSM 13496 / JCM 10307 / IC-167), this protein is dCTP deaminase.